Reading from the N-terminus, the 143-residue chain is Hemoglobin subunit alpha (143 aa).

Positions 3–143 (KLSGEDKANV…TMRLCISKYR (141 aa)) constitute a Globin domain. His60 provides a ligand contact to O2. His89 serves as a coordination point for heme b.

The protein belongs to the globin family. Heterotetramer of two alpha chains and two beta chains. As to expression, red blood cells.

Its function is as follows. Involved in oxygen transport from the lung to the various peripheral tissues. The sequence is that of Hemoglobin subunit alpha (HBA) from Ambystoma mexicanum (Axolotl).